A 207-amino-acid chain; its full sequence is 2,3-bisphosphoglycerate-dependent phosphoglycerate mutase (207 aa).

Substrate is bound by residues 10-17 (RHGQSEWN), 23-24 (TG), Arg-62, 89-92 (ERDY), Lys-100, 116-117 (RR), and 160-161 (GN). His-11 functions as the Tele-phosphohistidine intermediate in the catalytic mechanism. The active-site Proton donor/acceptor is Glu-89.

It belongs to the phosphoglycerate mutase family. BPG-dependent PGAM subfamily. In terms of assembly, homodimer.

The enzyme catalyses (2R)-2-phosphoglycerate = (2R)-3-phosphoglycerate. Its pathway is carbohydrate degradation; glycolysis; pyruvate from D-glyceraldehyde 3-phosphate: step 3/5. In terms of biological role, catalyzes the interconversion of 2-phosphoglycerate and 3-phosphoglycerate. The chain is 2,3-bisphosphoglycerate-dependent phosphoglycerate mutase from Rhodopseudomonas palustris (strain BisB18).